We begin with the raw amino-acid sequence, 342 residues long: MSKQPGQQRPSPISATVDFEADGVQHGFLKLPISNDESAWGAVMIPVTVVKRGEGPTALLTGGNHGDEYEGITALQKLSSRLRAEDVQGRVIIVPMMNTPACTAGRRTSPMDGGNLNRSFPGDPDGSVTEKIADYFTRVLVPMSDVVLDLHSGGRTLDIIPFAASHVLDDAEQQRRALEGAKAFGAPYAIMMFELDAEALFDTAVERQGKIFVATELGGGGTSTPESLAITERGIDNFLVHYGLVEGELQVPDEPQIYLDMPDASCYVQSEHTGLLELTVALGDPVTQGQVIARVYDMTRSGVAPVEYRAERDGVLAARRFPASVNMGDTIAVIAEVVESLG.

Residues 103 to 124 (TAGRRTSPMDGGNLNRSFPGDP) form a disordered region.

Belongs to the DoeB deacetylase family. Requires Zn(2+) as cofactor.

It is found in the cytoplasm. It catalyses the reaction (2S)-2-acetamido-4-aminobutanoate + H2O = L-2,4-diaminobutanoate + acetate. Involved in the degradation of ectoine, which allows H.elongata to utilize ectoine as both a carbon and a nitrogen source for growth. Catalyzes the deacetylation of N-alpha-acetyl-L-2,4-diaminobutyrate (N-alpha-Ac-DABA) to yield L-2,4-diaminobutyrate (DABA). The polypeptide is N-alpha-acetyl-L-2,4-diaminobutyric acid deacetylase (Halomonas elongata (strain ATCC 33173 / DSM 2581 / NBRC 15536 / NCIMB 2198 / 1H9)).